Here is a 414-residue protein sequence, read N- to C-terminus: UPF0754 membrane protein tlr2287 (414 aa).

2 helical membrane-spanning segments follow: residues 2–22 and 386–406; these read ADISYWTLLVPPLAGGVIGYF and AIVRLGGILGFLIGVVQAGVL.

This sequence belongs to the UPF0754 family.

The protein localises to the cell inner membrane. The protein is UPF0754 membrane protein tlr2287 of Thermosynechococcus vestitus (strain NIES-2133 / IAM M-273 / BP-1).